The chain runs to 249 residues: DNA repair protein RecO (249 aa).

The protein belongs to the RecO family.

Its function is as follows. Involved in DNA repair and RecF pathway recombination. The protein is DNA repair protein RecO of Leptospira biflexa serovar Patoc (strain Patoc 1 / Ames).